Reading from the N-terminus, the 109-residue chain is Thiosulfate sulfurtransferase GlpE (109 aa).

The region spanning 16 to 104 (REQGAVVVDI…WRTTYPAEIS (89 aa)) is the Rhodanese domain. The active-site Cysteine persulfide intermediate is the Cys64.

Belongs to the GlpE family.

The protein localises to the cytoplasm. It carries out the reaction thiosulfate + hydrogen cyanide = thiocyanate + sulfite + 2 H(+). The enzyme catalyses thiosulfate + [thioredoxin]-dithiol = [thioredoxin]-disulfide + hydrogen sulfide + sulfite + 2 H(+). Transferase that catalyzes the transfer of sulfur from thiosulfate to thiophilic acceptors such as cyanide or dithiols. May function in a CysM-independent thiosulfate assimilation pathway by catalyzing the conversion of thiosulfate to sulfite, which can then be used for L-cysteine biosynthesis. This chain is Thiosulfate sulfurtransferase GlpE, found in Pseudomonas fluorescens (strain SBW25).